The chain runs to 536 residues: MDNSSQSKPSSSSSSHSPSPAAITPTQRTTRDSGLCSTIDIPEIQAQCIDNLNSHYLGKGTYGLVEKTRYRKTRQDDFRPAAIKYSSQLHMATLIREAKVMWDLRNHPNIIKIYGLYKSPRNGQGVVMEYMDCGSMADLLYDRTHINYTIDHVASWMFQLSSAVDFFHSNSQVHRDLKLQNMLLSDRYRTMKLCDFGTFTSMHQSMTSNRGTPITMAPEVFRCEQYNMKSDIYSIGIIMWQIIARNHPYRRDLSVPGLLYNVATANLRPQELECNPILSEFYKKCWNDNADIRPTSSECVEYFTLLKDEYPNGSVPLSDSSTNGPAETPPPHAHRPTMLGTSSGSGIGSNNRTPTASKLLNPQQPGQGHRRNRSETFVVQPDLPYPTVPGEAGASRIPKSQSEAKNFRDRAKSEQRQPHRDARPPPPFEHRRDSNDEEKHAVFMNICSNEETRPIDPDTRDEKSLEIFHQHCDNNKQYADAWVIKKEVMRAKHELIAQWPQHDHTVELLERKYYLEQEIARYRDIQDDNYFSTERM.

Positions 1–20 (MDNSSQSKPSSSSSSHSPSP) are enriched in low complexity. The segment at 1–34 (MDNSSQSKPSSSSSSHSPSPAAITPTQRTTRDSG) is disordered. Residues 51 to 305 (NLNSHYLGKG…SSECVEYFTL (255 aa)) form the Protein kinase domain. Residues 57–65 (LGKGTYGLV) and K84 contribute to the ATP site. Residue D176 is the Proton acceptor of the active site. The tract at residues 314–438 (SVPLSDSSTN…EHRRDSNDEE (125 aa)) is disordered. Polar residues-rich tracts occupy residues 315–325 (VPLSDSSTNGP) and 350–366 (NNRT…QQPG). The span at 405–438 (KNFRDRAKSEQRQPHRDARPPPPFEHRRDSNDEE) shows a compositional bias: basic and acidic residues.

Belongs to the protein kinase superfamily. STE Ser/Thr protein kinase family. MAP kinase kinase kinase subfamily. In terms of assembly, interacts with, and is activated by, tap-1. It depends on Mg(2+) as a cofactor. Post-translationally, may be autophosphorylated.

The catalysed reaction is L-seryl-[protein] + ATP = O-phospho-L-seryl-[protein] + ADP + H(+). It carries out the reaction L-threonyl-[protein] + ATP = O-phospho-L-threonyl-[protein] + ADP + H(+). Functionally, part of the Wnt signaling pathway essential for the specification of the mesodermal cell fate in early embryos. Stimulates the wrm-1/lit-1-dependent phosphorylation of pop-1 and plays a role in the initial nuclear accumulation of wrm-1. The chain is Mitogen-activated protein kinase kinase kinase mom-4 from Caenorhabditis elegans.